The following is a 404-amino-acid chain: S-adenosylmethionine synthase (404 aa).

139-144 (GKGSTD) is an ATP binding site.

This sequence belongs to the AdoMet synthase 2 family. Mg(2+) serves as cofactor.

It carries out the reaction L-methionine + ATP + H2O = S-adenosyl-L-methionine + phosphate + diphosphate. It participates in amino-acid biosynthesis; S-adenosyl-L-methionine biosynthesis; S-adenosyl-L-methionine from L-methionine: step 1/1. In terms of biological role, catalyzes the formation of S-adenosylmethionine from methionine and ATP. This Saccharolobus islandicus (strain L.S.2.15 / Lassen #1) (Sulfolobus islandicus) protein is S-adenosylmethionine synthase.